The sequence spans 507 residues: Transcription factor SOX-9 (507 aa).

2 disordered regions span residues 1–67 (MNLL…SEED) and 160–250 (RLRV…AGKV). A compositionally biased stretch (low complexity) spans 30–41 (SAGSPCPSGSGS). Residues 42-52 (DTENTRPQENT) are compositionally biased toward polar residues. Basic and acidic residues-rich tracts occupy residues 56 to 67 (GEPDLKKESEED) and 160 to 174 (RLRVQHKKDHPDYKY). The tract at residues 63-103 (ESEEDKFPVCIREAVSQVLKGYDWTLVPMPVRVNGSSKNKP) is dimerization (DIM). Residues 63-103 (ESEEDKFPVCIREAVSQVLKGYDWTLVPMPVRVNGSSKNKP) form a PQA region. Position 64 is a phosphoserine; by PKA (S64). Positions 105–173 (VKRPMNAFMV…QHKKDHPDYK (69 aa)) form a DNA-binding region, HMG box. Phosphoserine; by PKA is present on S211. Residues 224–307 (PGEHSGQSQG…LPPNGHPGVP (84 aa)) are transactivation domain (TAM). Short sequence motifs (9aaTAD) lie at residues 275-284 (IGELSSDVIS) and 290-298 (DVNEFDQYL). The interval 335-429 (WMSKQQAPPP…PFNLPHYSPS (95 aa)) is disordered. Residues 341–369 (APPPPPQQPPQAPQAPQAPPQQQAPPQQP) show a composition bias toward pro residues. Residues 378 to 420 (HTLTTLSSEPGQSQRTHIKTEQLSPSHYSEQQQHSPQQISYSP) show a composition bias toward polar residues. Residues 392–507 (RTHIKTEQLS…QPVYTQLTRP (116 aa)) form a transactivation domain (TAC) region. Residue K396 forms a Glycyl lysine isopeptide (Lys-Gly) (interchain with G-Cter in ubiquitin) linkage. The 9aaTAD 3 motif lies at 458–466 (SGLYSTFTY). A disordered region spans residues 477 to 507 (PIADTSGVPSIPQTHSPQHWEQPVYTQLTRP). The span at 483–507 (GVPSIPQTHSPQHWEQPVYTQLTRP) shows a compositional bias: polar residues.

As to quaternary structure, homodimer; homodimerization is required for activity. Interacts (via C-terminus) with ZNF219; forming a complex that binds to the COL2A1 promoter and activates COL2A1 expression. Interacts with DDRGK1. Interacts with EP300/p300. Interacts with beta-catenin (CTNNB1); inhibiting CTNNB1 activity by competing with the binding sites of TCF/LEF within CTNNB1. In terms of processing, acetylated; acetylation impairs nuclear localization and ability to transactivate expression of target genes. Deacetylated by SIRT1. Phosphorylation at Ser-64 and Ser-211 by PKA increases transcriptional activity and may help delay chondrocyte maturation downstream of PTHLH/PTHrP signaling. Phosphorylation at either Ser-64 or Ser-211 is required for sumoylation, but phosphorylation is not dependent on sumoylation. Phosphorylated on tyrosine residues; tyrosine dephosphorylation by PTPN11/SHP2 blocks SOX9 phosphorylation by PKA and subsequent SUMOylation. Post-translationally, sumoylated; phosphorylation at either Ser-64 or Ser-211 is required for sumoylation. Sumoylation is induced by BMP signaling pathway. In terms of processing, ubiquitinated; ubiquitination leads to proteasomal degradation and is negatively regulated by DDRGK1. In terms of tissue distribution, expressed in the intestinal epithelium (at protein level). Expressed in progenitor cells in various organs, including chondroprogenitors, osteoprogenitors and preadipocytes, but is not expressed in most differentiated cell types such as osteoblasts and adipocytes, with the exception of chondrocytes. Highly expressed in developing chondrogenic tissues. Also expressed in some non-chondrogenic tissues such as notochord, otic vesicle and neural tube.

It localises to the nucleus. Transcription factor that plays a key role in chondrocytes differentiation and skeletal development. Specifically binds the 5'-ACAAAG-3' DNA motif present in enhancers and super-enhancers and promotes expression of genes important for chondrogenesis, including cartilage matrix protein-coding genes COL2A1, COL4A2, COL9A1, COL11A2 and ACAN, SOX5 and SOX6. Also binds to some promoter regions. Plays a central role in successive steps of chondrocyte differentiation. Absolutely required for precartilaginous condensation, the first step in chondrogenesis during which skeletal progenitors differentiate into prechondrocytes. Together with SOX5 and SOX6, required for overt chondrogenesis when condensed prechondrocytes differentiate into early stage chondrocytes, the second step in chondrogenesis. Later, required to direct hypertrophic maturation and block osteoblast differentiation of growth plate chondrocytes: maintains chondrocyte columnar proliferation, delays prehypertrophy and then prevents osteoblastic differentiation of chondrocytes by lowering beta-catenin (CTNNB1) signaling and RUNX2 expression. Also required for chondrocyte hypertrophy, both indirectly, by keeping the lineage fate of chondrocytes, and directly, by remaining present in upper hypertrophic cells and transactivating COL10A1 along with MEF2C. Low lipid levels are the main nutritional determinant for chondrogenic commitment of skeletal progenitor cells: when lipids levels are low, FOXO (FOXO1 and FOXO3) transcription factors promote expression of SOX9, which induces chondrogenic commitment and suppresses fatty acid oxidation. Mechanistically, helps, but is not required, to remove epigenetic signatures of transcriptional repression and deposit active promoter and enhancer marks at chondrocyte-specific genes. Acts in cooperation with the Hedgehog pathway-dependent GLI (GLI1 and GLI3) transcription factors. In addition to cartilage development, also acts as a regulator of proliferation and differentiation in epithelial stem/progenitor cells: involved in the lung epithelium during branching morphogenesis, by balancing proliferation and differentiation and regulating the extracellular matrix. Controls epithelial branching during kidney development. This Mus musculus (Mouse) protein is Transcription factor SOX-9.